The sequence spans 150 residues: Ribosome maturation factor RimP (150 aa).

Belongs to the RimP family.

The protein resides in the cytoplasm. Functionally, required for maturation of 30S ribosomal subunits. In Salmonella dublin (strain CT_02021853), this protein is Ribosome maturation factor RimP.